Reading from the N-terminus, the 279-residue chain is Lysozyme-like protein 2 (279 aa).

Positions 1–19 (MIKLLVSFTILFVLSSARP) are cleaved as a signal peptide. Positions 47 to 265 (MGNAVDFSFP…AAAPKTEVNM (219 aa)) constitute a Ch-type lysozyme domain.

The protein belongs to the glycosyl hydrolase 25 family. As to expression, expressed in intestine.

Involved in resistance to Gram-positive bacteria P.aeruginosa or B.thuringiensis infection. This chain is Lysozyme-like protein 2, found in Caenorhabditis elegans.